The primary structure comprises 487 residues: Malonate-semialdehyde dehydrogenase (487 aa).

Positions 150, 152, 176, 179, 180, 229, and 251 each coordinate NAD(+). Catalysis depends on C284, which acts as the Nucleophile. NAD(+) is bound at residue E382.

It belongs to the aldehyde dehydrogenase family. IolA subfamily. In terms of assembly, homotetramer.

It catalyses the reaction 3-oxopropanoate + NAD(+) + CoA + H2O = hydrogencarbonate + acetyl-CoA + NADH + H(+). It carries out the reaction 2-methyl-3-oxopropanoate + NAD(+) + CoA + H2O = propanoyl-CoA + hydrogencarbonate + NADH + H(+). It participates in polyol metabolism; myo-inositol degradation into acetyl-CoA; acetyl-CoA from myo-inositol: step 7/7. In terms of biological role, catalyzes the oxidation of malonate semialdehyde (MSA) and methylmalonate semialdehyde (MMSA) into acetyl-CoA and propanoyl-CoA, respectively. Is involved in a myo-inositol catabolic pathway. Bicarbonate, and not CO2, is the end-product of the enzymatic reaction. The polypeptide is Malonate-semialdehyde dehydrogenase (Bacillus velezensis (strain DSM 23117 / BGSC 10A6 / LMG 26770 / FZB42) (Bacillus amyloliquefaciens subsp. plantarum)).